The sequence spans 265 residues: 2-C-methyl-D-erythritol 4-phosphate cytidylyltransferase (265 aa).

A compositionally biased stretch (basic and acidic residues) spans 231–241; the sequence is DRGGASREAER. The disordered stretch occupies residues 231 to 265; the sequence is DRGGASREAERSAMPSAATSVFSGARSAASGSEEV. Residues 253-265 are compositionally biased toward low complexity; it reads SGARSAASGSEEV.

This sequence belongs to the IspD/TarI cytidylyltransferase family. IspD subfamily.

The enzyme catalyses 2-C-methyl-D-erythritol 4-phosphate + CTP + H(+) = 4-CDP-2-C-methyl-D-erythritol + diphosphate. It functions in the pathway isoprenoid biosynthesis; isopentenyl diphosphate biosynthesis via DXP pathway; isopentenyl diphosphate from 1-deoxy-D-xylulose 5-phosphate: step 2/6. Its function is as follows. Catalyzes the formation of 4-diphosphocytidyl-2-C-methyl-D-erythritol from CTP and 2-C-methyl-D-erythritol 4-phosphate (MEP). The sequence is that of 2-C-methyl-D-erythritol 4-phosphate cytidylyltransferase from Xanthomonas campestris pv. campestris (strain 8004).